Consider the following 514-residue polypeptide: Beta-glucosidase 21 (514 aa).

The first 25 residues, 1 to 25 (MERPLHLLLVFLSSPWLLLLQGVSS), serve as a signal peptide directing secretion. A beta-D-glucoside contacts are provided by glutamine 47 and histidine 147. Glutamate 193 serves as the catalytic Proton donor. Cysteine 212 and cysteine 220 form a disulfide bridge. Residues asparagine 219 and asparagine 224 are each glycosylated (N-linked (GlcNAc...) asparagine). A beta-D-glucoside contacts are provided by tyrosine 336 and glutamate 406. Glutamate 406 (nucleophile) is an active-site residue. N-linked (GlcNAc...) asparagine glycosylation is present at asparagine 407. A beta-D-glucoside is bound by residues tryptophan 448 and phenylalanine 465. N-linked (GlcNAc...) asparagine glycosylation is present at asparagine 494.

Belongs to the glycosyl hydrolase 1 family.

It catalyses the reaction Hydrolysis of terminal, non-reducing beta-D-glucosyl residues with release of beta-D-glucose.. This is Beta-glucosidase 21 (BGLU21) from Oryza sativa subsp. japonica (Rice).